The following is a 157-amino-acid chain: SsrA-binding protein (157 aa).

The segment at histidine 133–arginine 157 is disordered.

Belongs to the SmpB family.

It is found in the cytoplasm. In terms of biological role, required for rescue of stalled ribosomes mediated by trans-translation. Binds to transfer-messenger RNA (tmRNA), required for stable association of tmRNA with ribosomes. tmRNA and SmpB together mimic tRNA shape, replacing the anticodon stem-loop with SmpB. tmRNA is encoded by the ssrA gene; the 2 termini fold to resemble tRNA(Ala) and it encodes a 'tag peptide', a short internal open reading frame. During trans-translation Ala-aminoacylated tmRNA acts like a tRNA, entering the A-site of stalled ribosomes, displacing the stalled mRNA. The ribosome then switches to translate the ORF on the tmRNA; the nascent peptide is terminated with the 'tag peptide' encoded by the tmRNA and targeted for degradation. The ribosome is freed to recommence translation, which seems to be the essential function of trans-translation. This Verminephrobacter eiseniae (strain EF01-2) protein is SsrA-binding protein.